Consider the following 481-residue polypeptide: Serine/threonine-protein kinase US3 (481 aa).

The segment at 12–63 (GQGRRKEEAVPPETKPSRVFPHGPFYTPAEDACLDSPPPETPKPSHTTPPSE) is disordered. The 288-residue stretch at 191-478 (FTIHGALTPG…AAELLCLPLF (288 aa)) folds into the Protein kinase domain. Residues 197 to 205 (LTPGSEGCV) and lysine 220 each bind ATP. The Proton acceptor role is filled by aspartate 305.

The protein belongs to the protein kinase superfamily. Ser/Thr protein kinase family. Interacts with host LAT; this interaction prevents LAT activation of TRAF6. Phosphorylated by UL13; this phosphorylation regulates subsequent phosphorylation of UL31 and UL34 by US3. Autophosphorylated.

The protein localises to the host cytoplasm. It localises to the host nucleus. The catalysed reaction is L-seryl-[protein] + ATP = O-phospho-L-seryl-[protein] + ADP + H(+). The enzyme catalyses L-threonyl-[protein] + ATP = O-phospho-L-threonyl-[protein] + ADP + H(+). In terms of biological role, multifunctional serine/threonine kinase that plays a role in several processes including egress of virus particles from the nucleus, modulation of the actin cytoskeleton and inhibition of host immune response. Phosphorylates UL31 and UL34, two critical regulators of capsid budding from nucleus to endoplasmic reticulum, thereby facilitating virion egress. Modulates and redistributes host components of the nuclear envelope, including LMNA, emerin/EMD and the nuclear matrix protein MATR3. In turn, facilitates nuclear pore impairment and capsid release through impaired nuclear envelope. Phosphorylates envelope glycoprotein B (gB), probably to direct it to the cell surface. Promotes virus intracellular spread by restructuring host cell cytoskeleton. Blocks host apoptosis to extend cell survival and allow efficient viral replication. Promotes viral gene expression by phosphorylating host HDAC2 to reduce viral genome silencing. Strongly inhibits TCR-activated signal transduction in T-cells by reducing the ubiquitination of LAT and TRAF6, leading to a suboptimal activation of LAT. Subverts host antiviral innate immunity by inhibiting type I interferon production through hyperphosphorylation of beta-catenin/CTNNB1. In addition, phosphorylates the RNA sensor RIGI and the transcription factor IRF3 to prevent the RLR-mediated antiviral signaling pathway. Hyperphosphorylates host RELA and thereby dampens NF-kappa-B signaling. Acts as an immunoevasin partly responsible for inhibition of MR1 expression and antigen presentation in response to bacterial infection. This chain is Serine/threonine-protein kinase US3 (US3), found in Human herpesvirus 1 (strain 17) (HHV-1).